Reading from the N-terminus, the 396-residue chain is MSGDKKSRSVIYKKTSRDKAVSVYLGKRDYVDHIESVDPVDGVVFVDPDLLKGKKVYVTLTCAFRYGNEDIDVIGLTFRKDLFFARTQVYPPVEDVKCLTKVQERLMKKLGNNAYPFVMAFPDYLPCSVSLQPALSDVNKACGVDFEVKAFSASNLEDRYHKKNSVRLLIRKIQYAPDQPGPTPRAETSWQFFMSDKPLHLTASLAKEVFYHGETITVAVTVTNSSEKTVKKISTSVEQTANVVLYSSDFYTKTVAFDESDEKVSPKSTYKHTFTLLPLLAYNREKREIALDGKLKHEDTNLASSTLLKEGIDRTVMGILVDYKIKVTLTVSGLLGDMTSSEVSTELPFILMHPKPDSGAKESEQEEDFVFEDFARDQLKDELQPEEKEEEEEDEK.

Belongs to the arrestin family.

Functionally, arrestin is one of the major proteins of the ros (retinal rod outer segments); it binds to photoactivated-phosphorylated rhodopsin, thereby apparently preventing the transducin-mediated activation of phosphodiesterase. The polypeptide is S-arrestin (Aquarana catesbeiana (American bullfrog)).